We begin with the raw amino-acid sequence, 90 residues long: Probable Fe(2+)-trafficking protein (90 aa).

It belongs to the Fe(2+)-trafficking protein family. Monomer.

Functionally, could be a mediator in iron transactions between iron acquisition and iron-requiring processes, such as synthesis and/or repair of Fe-S clusters in biosynthetic enzymes. This Pectobacterium carotovorum subsp. carotovorum (strain PC1) protein is Probable Fe(2+)-trafficking protein.